We begin with the raw amino-acid sequence, 87 residues long: Serine protease inhibitor Kazal-type 12 (87 aa).

Positions 1 to 22 are cleaved as a signal peptide; that stretch reads MKPAGAFLLLISLACLFLSVDA. The Kazal-like domain maps to 26–87; it reads GGFQAFCSNY…KLGFKHEGKC (62 aa). Intrachain disulfides connect Cys32–Cys68, Cys46–Cys65, and Cys54–Cys87.

Expressed in epydiymis, in the caput.

Its subcellular location is the secreted. In terms of biological role, inhibits trypsin. In Mus musculus (Mouse), this protein is Serine protease inhibitor Kazal-type 12 (Spink12).